The chain runs to 612 residues: Dihydroxy-acid dehydratase (612 aa).

Asp81 lines the Mg(2+) pocket. Cys122 contacts [2Fe-2S] cluster. Residues Asp123 and Lys124 each contribute to the Mg(2+) site. The residue at position 124 (Lys124) is an N6-carboxylysine. Cys195 is a binding site for [2Fe-2S] cluster. Glu491 is a Mg(2+) binding site. The Proton acceptor role is filled by Ser517.

It belongs to the IlvD/Edd family. Homodimer. It depends on [2Fe-2S] cluster as a cofactor. The cofactor is Mg(2+).

It catalyses the reaction (2R)-2,3-dihydroxy-3-methylbutanoate = 3-methyl-2-oxobutanoate + H2O. The catalysed reaction is (2R,3R)-2,3-dihydroxy-3-methylpentanoate = (S)-3-methyl-2-oxopentanoate + H2O. The protein operates within amino-acid biosynthesis; L-isoleucine biosynthesis; L-isoleucine from 2-oxobutanoate: step 3/4. It participates in amino-acid biosynthesis; L-valine biosynthesis; L-valine from pyruvate: step 3/4. Its function is as follows. Functions in the biosynthesis of branched-chain amino acids. Catalyzes the dehydration of (2R,3R)-2,3-dihydroxy-3-methylpentanoate (2,3-dihydroxy-3-methylvalerate) into 2-oxo-3-methylpentanoate (2-oxo-3-methylvalerate) and of (2R)-2,3-dihydroxy-3-methylbutanoate (2,3-dihydroxyisovalerate) into 2-oxo-3-methylbutanoate (2-oxoisovalerate), the penultimate precursor to L-isoleucine and L-valine, respectively. The polypeptide is Dihydroxy-acid dehydratase (Sinorhizobium medicae (strain WSM419) (Ensifer medicae)).